Here is a 357-residue protein sequence, read N- to C-terminus: Neurogenic differentiation factor 1 (357 aa).

A disordered region spans residues 1-94 (MTKSYSESGL…GPKKKKMTKA (94 aa)). Residues 58-78 (EEEEEDEDLEEEEEEEEEEED) show a composition bias toward acidic residues. Over residues 81–93 (PKRRGPKKKKMTK) the composition is skewed to basic residues. Residues 87-93 (KKKKMTK) carry the Nuclear localization signal motif. In terms of domain architecture, bHLH spans 101–153 (LRRMKANARERNRMHGLNAALDNLRKVVPCYSKTQKLSKIETLRLAKNYIWAL). 4 positions are modified to phosphoserine: Ser-162, Ser-259, Ser-266, and Ser-274. Ser-336 bears the Phosphoserine; by CaMK2 mark.

Efficient DNA-binding requires dimerization with another bHLH protein. Heterodimer with TCF3/E47; the heterodimer is inhibited in presence of ID2, but not NR0B2, to E-box element. Interacts with EP300; the interaction is inhibited by NR0B2. Interacts with RREB1. Interacts with ATOH8. In terms of processing, in islet cells, phosphorylated on Ser-274 upon glucose stimulation; which may be required for nuclear localization. In activated neurons, phosphorylated on Ser-336; which promotes dendritic growth. Phosphorylated by MAPK1; phosphorylation regulates heterodimerization and DNA-binding activities. Phosphorylation on Ser-266 and Ser-274 increases transactivation on the insulin promoter in glucose-stimulated insulinoma cells. As to expression, expressed in pancreatic beta cells, pulmonary neuroendocrine cells and retinal interneurons amacrine cells (at protein level). Expressed in endocrine cells of the pancreas. Expressed in the inner layer of cerebellar external granular layer (EGL). Expressed in the Ammon's horn (AH), which includes the CA1-CA3 pyramidal layer and in granule cells of the dentate gyrus (DG). Expressed in photoreceptors of the outer nuclear layer (ONL), in a subset of cells in the lower half of the inner nuclear layer (INL), and in a subset of cells in the ganglion cell layer (GCL) of the retina. Expressed in cholinergic and AII amacrine cell types. Expressed in differentiating neurons of both the central and peripheral nervous systems.

The protein resides in the cytoplasm. The protein localises to the nucleus. Functionally, acts as a transcriptional activator: mediates transcriptional activation by binding to E box-containing promoter consensus core sequences 5'-CANNTG-3'. Associates with the p300/CBP transcription coactivator complex to stimulate transcription of the secretin gene as well as the gene encoding the cyclin-dependent kinase inhibitor CDKN1A. Contributes to the regulation of several cell differentiation pathways, like those that promote the formation of early retinal ganglion cells, inner ear sensory neurons, granule cells forming either the cerebellum or the dentate gyrus cell layer of the hippocampus, endocrine islet cells of the pancreas and enteroendocrine cells of the small intestine. Together with PAX6 or SIX3, is required for the regulation of amacrine cell fate specification. Also required for dendrite morphogenesis and maintenance in the cerebellar cortex. Associates with chromatin to enhancer regulatory elements in genes encoding key transcriptional regulators of neurogenesis. The chain is Neurogenic differentiation factor 1 (Neurod1) from Mus musculus (Mouse).